The chain runs to 382 residues: Lipid-A-disaccharide synthase (382 aa).

Belongs to the LpxB family.

It catalyses the reaction a lipid X + a UDP-2-N,3-O-bis[(3R)-3-hydroxyacyl]-alpha-D-glucosamine = a lipid A disaccharide + UDP + H(+). The protein operates within bacterial outer membrane biogenesis; LPS lipid A biosynthesis. Condensation of UDP-2,3-diacylglucosamine and 2,3-diacylglucosamine-1-phosphate to form lipid A disaccharide, a precursor of lipid A, a phosphorylated glycolipid that anchors the lipopolysaccharide to the outer membrane of the cell. The polypeptide is Lipid-A-disaccharide synthase (Alteromonas mediterranea (strain DSM 17117 / CIP 110805 / LMG 28347 / Deep ecotype)).